The sequence spans 49 residues: uncharacterized protein (49 aa).

Residues 17–39 (LLVFDTSLYIPPFMLSFIGYSLS) form a helical membrane-spanning segment.

It localises to the membrane. This is an uncharacterized protein from Saccharomyces cerevisiae (strain ATCC 204508 / S288c) (Baker's yeast).